The sequence spans 261 residues: tRNA pseudouridine synthase A (261 aa).

The active-site Nucleophile is the Asp-51. A substrate-binding site is contributed by Tyr-109.

It belongs to the tRNA pseudouridine synthase TruA family. In terms of assembly, homodimer.

It carries out the reaction uridine(38/39/40) in tRNA = pseudouridine(38/39/40) in tRNA. Formation of pseudouridine at positions 38, 39 and 40 in the anticodon stem and loop of transfer RNAs. This Shewanella loihica (strain ATCC BAA-1088 / PV-4) protein is tRNA pseudouridine synthase A.